The primary structure comprises 187 residues: GTP cyclohydrolase 1 (187 aa).

Zn(2+) is bound by residues Cys76, His79, and Cys148.

The protein belongs to the GTP cyclohydrolase I family. Toroid-shaped homodecamer, composed of two pentamers of five dimers.

The enzyme catalyses GTP + H2O = 7,8-dihydroneopterin 3'-triphosphate + formate + H(+). Its pathway is cofactor biosynthesis; 7,8-dihydroneopterin triphosphate biosynthesis; 7,8-dihydroneopterin triphosphate from GTP: step 1/1. The chain is GTP cyclohydrolase 1 from Streptococcus thermophilus (strain CNRZ 1066).